The chain runs to 489 residues: 3-octaprenyl-4-hydroxybenzoate carboxy-lyase (489 aa).

Position 172 (asparagine 172) interacts with Mn(2+). Prenylated FMN-binding positions include 175-177 (IYR), 189-191 (RWL), and 194-195 (RG). A Mn(2+)-binding site is contributed by glutamate 238. Aspartate 287 serves as the catalytic Proton donor.

Belongs to the UbiD family. As to quaternary structure, homohexamer. The cofactor is prenylated FMN. Mn(2+) serves as cofactor.

It localises to the cell membrane. The enzyme catalyses a 4-hydroxy-3-(all-trans-polyprenyl)benzoate + H(+) = a 2-(all-trans-polyprenyl)phenol + CO2. The protein operates within cofactor biosynthesis; ubiquinone biosynthesis. Its function is as follows. Catalyzes the decarboxylation of 3-octaprenyl-4-hydroxy benzoate to 2-octaprenylphenol, an intermediate step in ubiquinone biosynthesis. This Aeromonas hydrophila subsp. hydrophila (strain ATCC 7966 / DSM 30187 / BCRC 13018 / CCUG 14551 / JCM 1027 / KCTC 2358 / NCIMB 9240 / NCTC 8049) protein is 3-octaprenyl-4-hydroxybenzoate carboxy-lyase.